Here is a 311-residue protein sequence, read N- to C-terminus: Putative protease MJ0651 (311 aa).

Residue Ser128 is the Nucleophile of the active site. The active-site Proton donor/acceptor is the Lys180.

This sequence belongs to the peptidase S49 family.

The polypeptide is Putative protease MJ0651 (Methanocaldococcus jannaschii (strain ATCC 43067 / DSM 2661 / JAL-1 / JCM 10045 / NBRC 100440) (Methanococcus jannaschii)).